The following is a 983-amino-acid chain: Protein translocase subunit SecA (983 aa).

ATP is bound by residues Gln-83, 101–105 (GEGKT), and Asp-489. Residues 948–983 (ISSEEEDNNEKTNINNNEDLERTKGEAQQTAKNPNE) are disordered. The segment covering 973 to 983 (EAQQTAKNPNE) has biased composition (polar residues).

This sequence belongs to the SecA family. Monomer and homodimer. Part of the essential Sec protein translocation apparatus which comprises SecA, SecYEG and auxiliary proteins SecDF. Other proteins may also be involved.

It localises to the cell membrane. Its subcellular location is the cytoplasm. It catalyses the reaction ATP + H2O + cellular proteinSide 1 = ADP + phosphate + cellular proteinSide 2.. Its function is as follows. Part of the Sec protein translocase complex. Interacts with the SecYEG preprotein conducting channel. Has a central role in coupling the hydrolysis of ATP to the transfer of proteins into and across the cell membrane, serving as an ATP-driven molecular motor driving the stepwise translocation of polypeptide chains across the membrane. This Mesomycoplasma hyopneumoniae (strain J / ATCC 25934 / NCTC 10110) (Mycoplasma hyopneumoniae) protein is Protein translocase subunit SecA.